The sequence spans 250 residues: Triosephosphate isomerase (250 aa).

9-11 (NWK) serves as a coordination point for substrate. The active-site Electrophile is histidine 96. The Proton acceptor role is filled by glutamate 168. Residues glycine 174, serine 216, and 237 to 238 (GG) each bind substrate.

Belongs to the triosephosphate isomerase family. In terms of assembly, homodimer.

The protein localises to the cytoplasm. The catalysed reaction is D-glyceraldehyde 3-phosphate = dihydroxyacetone phosphate. It functions in the pathway carbohydrate biosynthesis; gluconeogenesis. Its pathway is carbohydrate degradation; glycolysis; D-glyceraldehyde 3-phosphate from glycerone phosphate: step 1/1. In terms of biological role, involved in the gluconeogenesis. Catalyzes stereospecifically the conversion of dihydroxyacetone phosphate (DHAP) to D-glyceraldehyde-3-phosphate (G3P). The chain is Triosephosphate isomerase from Leptospira interrogans serogroup Icterohaemorrhagiae serovar copenhageni (strain Fiocruz L1-130).